The chain runs to 468 residues: Aldehyde dehydrogenase family 3 member B1 (468 aa).

At M1 the chain carries N-acetylmethionine. 188-193 (GNPQVG) is a binding site for NAD(+). Residues E210 and C244 contribute to the active site. C463 carries S-palmitoyl cysteine lipidation. The residue at position 465 (C465) is a Cysteine methyl ester. The S-geranylgeranyl cysteine moiety is linked to residue C465. Residues 466 to 468 (TLL) constitute a propeptide, removed in mature form.

Belongs to the aldehyde dehydrogenase family. Post-translationally, dually lipidated in the C-terminus; prenylation occurs prior to, and is a prerequisite for palmitoylation. It is also required for activity towards long-chain substrates.

It localises to the cell membrane. The catalysed reaction is an aldehyde + NAD(+) + H2O = a carboxylate + NADH + 2 H(+). It carries out the reaction a long-chain fatty aldehyde + NAD(+) + H2O = a long-chain fatty acid + NADH + 2 H(+). It catalyses the reaction a medium-chain fatty aldehyde + NAD(+) + H2O = a medium-chain fatty acid + NADH + 2 H(+). The enzyme catalyses octanal + NAD(+) + H2O = octanoate + NADH + 2 H(+). The catalysed reaction is nonanal + NAD(+) + H2O = nonanoate + NADH + 2 H(+). It carries out the reaction hexadecanoate + NADH + 2 H(+) = hexadecanal + NAD(+) + H2O. It catalyses the reaction (2E)-octenal + NAD(+) + H2O = (2E)-octenoate + NADH + 2 H(+). The enzyme catalyses (E)-non-2-enal + NAD(+) + H2O = (E)-non-2-enoate + NADH + 2 H(+). The catalysed reaction is (E)-4-hydroxynon-2-enal + NAD(+) + H2O = (E)-4-hydroxynon-2-enoate + NADH + 2 H(+). It carries out the reaction (2E)-hexadecenal + NAD(+) + H2O = (E)-hexadec-2-enoate + NADH + 2 H(+). It catalyses the reaction benzaldehyde + NAD(+) + H2O = benzoate + NADH + 2 H(+). The enzyme catalyses an aldehyde + NADP(+) + H2O = a carboxylate + NADPH + 2 H(+). The catalysed reaction is a medium-chain fatty aldehyde + NADP(+) + H2O = a medium-chain fatty acid + NADPH + 2 H(+). It carries out the reaction hexanal + NADP(+) + H2O = hexanoate + NADPH + 2 H(+). It catalyses the reaction octanal + NADP(+) + H2O = octanoate + NADPH + 2 H(+). The enzyme catalyses nonanal + NADP(+) + H2O = nonanoate + NADPH + 2 H(+). The catalysed reaction is (2E)-octenal + NADP(+) + H2O = (2E)-octenoate + NADPH + 2 H(+). It carries out the reaction (E)-non-2-enal + NADP(+) + H2O = (E)-non-2-enoate + NADPH + 2 H(+). It catalyses the reaction (E)-4-hydroxynon-2-enal + NADP(+) + H2O = (E)-4-hydroxynon-2-enoate + NADPH + 2 H(+). The enzyme catalyses benzaldehyde + NADP(+) + H2O = benzoate + NADPH + 2 H(+). Its pathway is alcohol metabolism; ethanol degradation; acetate from ethanol: step 2/2. In terms of biological role, oxidizes medium and long chain saturated and unsaturated fatty aldehydes generated in the plasma membrane into non-toxic fatty acids. May have a protective role against the cytotoxicity induced by lipid peroxidation. Short-chain fatty aldehydes are not good substrates. Can use both NADP(+) and NAD(+) as electron acceptor in vitro, however in vivo preference will depend on their tissue levels. Low activity towards acetaldehyde and 3,4-dihydroxyphenylacetaldehyde. Able to metabolize aromatic aldehydes such as benzaldehyde to their acid form. This is Aldehyde dehydrogenase family 3 member B1 (ALDH3B1) from Bos taurus (Bovine).